The sequence spans 313 residues: Bifunctional pinoresinol-lariciresinol reductase 1 (313 aa).

NADP(+) contacts are provided by residues 11–17 (GGTGYIG), Arg-36, and Lys-45. Catalysis depends on Lys-138, which acts as the Proton acceptor. Position 142 (Arg-142) interacts with NADP(+). His-271 is a binding site for substrate.

The protein belongs to the NmrA-type oxidoreductase family. Isoflavone reductase subfamily. As to quaternary structure, dimer.

It catalyses the reaction (+)-lariciresinol + NADP(+) = (+)-pinoresinol + NADPH + H(+). The catalysed reaction is (-)-lariciresinol + NADP(+) = (-)-pinoresinol + NADPH + H(+). The enzyme catalyses (+)-secoisolariciresinol + NADP(+) = (-)-lariciresinol + NADPH + H(+). Reductase involved in lignan biosynthesis. Catalyzes the enantioselective sequential conversion of (-)-pinoresinol into (-)-lariciresinol and of (-)-lariciresinol into (+)-secoisolariciresinol. Can also convert with a lower efficiency (+)-pinoresinol into (+)-lariciresinol, but not (+)-lariciresinol into (-)-secoisolariciresinol. Abstracts the 4R-hydride from the NADPH cofactor during catalysis. The chain is Bifunctional pinoresinol-lariciresinol reductase 1 (PLR_Tp1) from Thuja plicata (Western red-cedar).